Here is a 441-residue protein sequence, read N- to C-terminus: Na(+)/H(+) antiporter NhaA 2 (441 aa).

Transmembrane regions (helical) follow at residues 34-54, 77-97, 115-135, 146-166, 176-196, 199-219, 225-245, 249-269, 290-310, 317-337, 355-375, and 389-409; these read VGGA…NSPW, LTLG…VVGL, ALPM…FVAV, GWAI…AVIS, FLLT…AVFY, EINL…ALCV, SWWL…ESGV, VAGV…AGGP, VAVP…VSGL, PITL…IFLT, WIDV…SLLI, and FVKV…AVLL.

This sequence belongs to the NhaA Na(+)/H(+) (TC 2.A.33) antiporter family.

The protein localises to the cell membrane. It catalyses the reaction Na(+)(in) + 2 H(+)(out) = Na(+)(out) + 2 H(+)(in). Na(+)/H(+) antiporter that extrudes sodium in exchange for external protons. This is Na(+)/H(+) antiporter NhaA 2 from Mycobacterium sp. (strain MCS).